Here is a 351-residue protein sequence, read N- to C-terminus: N-acetyl-gamma-glutamyl-phosphate reductase (351 aa).

The active site involves Cys154.

This sequence belongs to the NAGSA dehydrogenase family. Type 1 subfamily.

The protein localises to the cytoplasm. The enzyme catalyses N-acetyl-L-glutamate 5-semialdehyde + phosphate + NADP(+) = N-acetyl-L-glutamyl 5-phosphate + NADPH + H(+). Its pathway is amino-acid biosynthesis; L-arginine biosynthesis; N(2)-acetyl-L-ornithine from L-glutamate: step 3/4. Catalyzes the NADPH-dependent reduction of N-acetyl-5-glutamyl phosphate to yield N-acetyl-L-glutamate 5-semialdehyde. This chain is N-acetyl-gamma-glutamyl-phosphate reductase, found in Prochlorococcus marinus (strain MIT 9312).